The following is a 165-amino-acid chain: Chaperone protein SicA (165 aa).

The protein belongs to the LcrH/SycD chaperone family. Dimer or higher-order oligomers.

Its subcellular location is the cytoplasm. In terms of biological role, type III secretion-associated chaperone required for SipB and SipC stabilization. Prevents premature association of SipB with SipC, which may lead to their targeting for degradation. Along with InvF, required for transcription activation of sigDE (sopB pipC), sicAsipBCDA, and sopE. The chain is Chaperone protein SicA (sicA) from Salmonella dublin.